A 94-amino-acid polypeptide reads, in one-letter code: Probable Fe(2+)-trafficking protein (94 aa).

The protein belongs to the Fe(2+)-trafficking protein family.

In terms of biological role, could be a mediator in iron transactions between iron acquisition and iron-requiring processes, such as synthesis and/or repair of Fe-S clusters in biosynthetic enzymes. This Alcanivorax borkumensis (strain ATCC 700651 / DSM 11573 / NCIMB 13689 / SK2) protein is Probable Fe(2+)-trafficking protein.